We begin with the raw amino-acid sequence, 414 residues long: Serine hydroxymethyltransferase (414 aa).

(6S)-5,6,7,8-tetrahydrofolate-binding positions include leucine 116 and 120–122; that span reads GHL. Position 225 is an N6-(pyridoxal phosphate)lysine (lysine 225). 349–351 is a binding site for (6S)-5,6,7,8-tetrahydrofolate; it reads SPF.

It belongs to the SHMT family. Homodimer. Requires pyridoxal 5'-phosphate as cofactor.

The protein resides in the cytoplasm. The enzyme catalyses (6R)-5,10-methylene-5,6,7,8-tetrahydrofolate + glycine + H2O = (6S)-5,6,7,8-tetrahydrofolate + L-serine. The protein operates within one-carbon metabolism; tetrahydrofolate interconversion. It participates in amino-acid biosynthesis; glycine biosynthesis; glycine from L-serine: step 1/1. Functionally, catalyzes the reversible interconversion of serine and glycine with tetrahydrofolate (THF) serving as the one-carbon carrier. This reaction serves as the major source of one-carbon groups required for the biosynthesis of purines, thymidylate, methionine, and other important biomolecules. Also exhibits THF-independent aldolase activity toward beta-hydroxyamino acids, producing glycine and aldehydes, via a retro-aldol mechanism. The polypeptide is Serine hydroxymethyltransferase (Oenococcus oeni (strain ATCC BAA-331 / PSU-1)).